Reading from the N-terminus, the 295-residue chain is Hepatic leukemia factor (295 aa).

Basic and acidic residues predominate over residues Pro36 to Asp52. Disordered regions lie at residues Pro36–Tyr76 and Leu92–Arg149. The bZIP domain occupies Asp225–Tyr288. A basic motif region spans residues Lys227 to Arg247. Residues Leu248–Ile255 form a leucine-zipper region.

The protein belongs to the bZIP family. PAR subfamily. As to quaternary structure, binds DNA specifically as homodimer or heterodimer with other PAR factors.

It localises to the nucleus. This chain is Hepatic leukemia factor (Hlf), found in Mus musculus (Mouse).